The primary structure comprises 146 residues: Transcriptional repressor NrdR (146 aa).

A zinc finger spans residues 3–34 (CPFCQNPDTKVIDTRISDDGHSIRRRRVCPKC). One can recognise an ATP-cone domain in the interval 46 to 136 (LLVTKRSGGV…VYQNFAGLED (91 aa)).

The protein belongs to the NrdR family. It depends on Zn(2+) as a cofactor.

Negatively regulates transcription of bacterial ribonucleotide reductase nrd genes and operons by binding to NrdR-boxes. The sequence is that of Transcriptional repressor NrdR from Bifidobacterium longum (strain NCC 2705).